The following is a 658-amino-acid chain: Translation factor GUF1, mitochondrial (658 aa).

A mitochondrion-targeting transit peptide spans 1 to 40 (MRGCLQTVRWLTSAWQRPRSYSPLSRAAPCRFFNVSIPRN). Residues 60 to 240 (DRFRNFCIVA…TVVEQIPAPV (181 aa)) enclose the tr-type G domain. Residues 69-76 (AHVDHGKS), 133-137 (DTPGH), and 187-190 (NKVD) each bind GTP.

The protein belongs to the TRAFAC class translation factor GTPase superfamily. Classic translation factor GTPase family. LepA subfamily.

The protein resides in the mitochondrion inner membrane. It catalyses the reaction GTP + H2O = GDP + phosphate + H(+). Its function is as follows. Promotes mitochondrial protein synthesis. May act as a fidelity factor of the translation reaction, by catalyzing a one-codon backward translocation of tRNAs on improperly translocated ribosomes. Binds to mitochondrial ribosomes in a GTP-dependent manner. The chain is Translation factor GUF1, mitochondrial from Paracoccidioides lutzii (strain ATCC MYA-826 / Pb01) (Paracoccidioides brasiliensis).